The following is a 265-amino-acid chain: MSQASSTDTPFVIAGRTYGSRLLVGTGKYKDLDETRRAIEASGAEIVTVAVRRTNIGQNPDEPNLLDVIPPDRYTILPNTAGCYDAVEAVRTCRLARELLDGHNLVKLEVLADQKTLFPNVVETLKAAEQLVKDGFDVMVYTSDDPIIARQLAEIGCIAVMPLAGLIGSGLGICNPYNLRIILEEAKVPVLVDAGVGTASDAAIAMELGCEAVLMNTAIAHAKDPVMMAEAMKHAIVAGRLAYLAGRMPRKLYASASSPLDGLID.

K107 (schiff-base intermediate with DXP) is an active-site residue. Residues G168, 194-195, and 216-217 each bind 1-deoxy-D-xylulose 5-phosphate; these read AG and NT.

It belongs to the ThiG family. As to quaternary structure, homotetramer. Forms heterodimers with either ThiH or ThiS.

The protein resides in the cytoplasm. It carries out the reaction [ThiS sulfur-carrier protein]-C-terminal-Gly-aminoethanethioate + 2-iminoacetate + 1-deoxy-D-xylulose 5-phosphate = [ThiS sulfur-carrier protein]-C-terminal Gly-Gly + 2-[(2R,5Z)-2-carboxy-4-methylthiazol-5(2H)-ylidene]ethyl phosphate + 2 H2O + H(+). It functions in the pathway cofactor biosynthesis; thiamine diphosphate biosynthesis. Functionally, catalyzes the rearrangement of 1-deoxy-D-xylulose 5-phosphate (DXP) to produce the thiazole phosphate moiety of thiamine. Sulfur is provided by the thiocarboxylate moiety of the carrier protein ThiS. In vitro, sulfur can be provided by H(2)S. This is Thiazole synthase from Pseudomonas aeruginosa (strain LESB58).